A 667-amino-acid polypeptide reads, in one-letter code: MTQLSRFLYGGDYNPDQWPEETWSKDIHVFKKADINSATINIFSWALLEPREGKYNFSKLDKVVQQLSDANFDIVMGTATAAMPAWMFKKYPDIARVDYQDRRHVFGQRHNFCPNSSNYQRLAGELEKQLVERYKDNKHIVFWHINNEYGGNCYCENCQNAFKKWLKNKYKTVEGLNKAWNMNVWSHTIYDWDEIVVPNELGDVWGIKGSETIVAGLSIDYLRFQSESMQNLFKMEKKIIKKFDPETPVTTNFHGLPNKMVDYQKWAKGQDIISYDSYPTYDAPAYKAAFLYDLMRSLKHQPFMLMESAPSQVNWQPYSPLKRPGQMEATEFQAVAHGADTVQFFRLKQAVGGSEKFHSAVIAHSQRTVTRVFKELADLGKKLKNAGPTILGSKTKARFAIVFDWSNFWSYEYVDGITQDLNYVDSILDYYRQFYERNIPTDIIGVDDDFSNYDLVVAPVLYMVKHGLDKKINDYVENGGNFVTTYMSGMVNSSDNVYLGGYPGPLKEVTGIWVEESDAVVPGQKIKVLMNGKDYDTGLICNLIHPNDAKILATYASEFYAGTPAVTENQYGKGRAWYIGTRLEHQGLTQLFNHIIFETGVESLVCDSHKLEITKRVTEDGKELYFVLNMSNEERTLPSKFTGYEDILTGEKAHKDMKGWDVQVLRN.

Arginine 109 contacts substrate. Cysteine 113 contributes to the Zn(2+) binding site. Residue asparagine 147 participates in substrate binding. Catalysis depends on glutamate 148, which acts as the Proton donor. The Zn(2+) site is built by cysteine 153, cysteine 155, and cysteine 158. Glutamate 307 (nucleophile) is an active-site residue. Residues tryptophan 315 and 355–358 (EKFH) contribute to the substrate site.

This sequence belongs to the glycosyl hydrolase 42 family.

The catalysed reaction is Hydrolysis of terminal non-reducing beta-D-galactose residues in beta-D-galactosides.. Functionally, hydrolyzes lactose, oNP-galactoside (oNPG), pNP-galactosidase (pNPG), pNP-mannoside, pNP-glucoside, pNP-fucoside, pNP-N-acetylglucosamide, but not pNP-arabinoside or 4-methylumbelliferyl-beta-galactopyranoside (MUG). Transgalactosylates lactose at 10 g/L, but not at 270 g/L. The polypeptide is Beta-galactosidase LacA (Lactobacillus acidophilus).